Here is a 657-residue protein sequence, read N- to C-terminus: Bifunctional lysine-specific demethylase and histidyl-hydroxylase NO66 (657 aa).

Disordered regions lie at residues 1–141 and 165–198; these read MQKA…QTSP and KSCPLPSKKDSVTKSPMTVHEAPKVDSATSNSNE. Polar residues predominate over residues 32-41; that stretch reads SAKTVDTVTD. The span at 55–71 shows a compositional bias: basic and acidic residues; that stretch reads AEKERRKYLQARVRAEG. Composition is skewed to polar residues over residues 73 to 84 and 132 to 141; these read SASTSSKSNATR and RSQGLEQTSP. A Phosphoserine modification is found at Ser133. The residue at position 139 (Thr139) is a Phosphothreonine. Ser140 bears the Phosphoserine mark. The JmjC domain occupies 315-454; that stretch reads NPSTYLLGLR…NLLETLMPIV (140 aa). Fe cation contacts are provided by His355, Asp357, and His420.

The protein belongs to the ROX family. NO66 subfamily. It depends on Fe(2+) as a cofactor.

The protein resides in the nucleus. It catalyses the reaction N(6),N(6)-dimethyl-L-lysyl(36)-[histone H3] + 2 2-oxoglutarate + 2 O2 = L-lysyl(36)-[histone H3] + 2 formaldehyde + 2 succinate + 2 CO2. Functionally, oxygenase that can act as both a histone lysine demethylase and a ribosomal histidine hydroxylase. Specifically demethylates 'Lys-4' (H3K4me) and 'Lys-36' (H3K36me) of histone H3, thereby playing a central role in histone code. In Drosophila erecta (Fruit fly), this protein is Bifunctional lysine-specific demethylase and histidyl-hydroxylase NO66.